Reading from the N-terminus, the 412-residue chain is DNA polymerase IV 2 (412 aa).

The 186-residue stretch at 7-192 folds into the UmuC domain; sequence IFLVDMQSFY…LPVGSMFGVG (186 aa). Residues aspartate 11 and aspartate 107 each coordinate Mg(2+). Glutamate 108 is an active-site residue.

Belongs to the DNA polymerase type-Y family. As to quaternary structure, monomer. Requires Mg(2+) as cofactor.

Its subcellular location is the cytoplasm. The catalysed reaction is DNA(n) + a 2'-deoxyribonucleoside 5'-triphosphate = DNA(n+1) + diphosphate. Poorly processive, error-prone DNA polymerase involved in untargeted mutagenesis. Copies undamaged DNA at stalled replication forks, which arise in vivo from mismatched or misaligned primer ends. These misaligned primers can be extended by PolIV. Exhibits no 3'-5' exonuclease (proofreading) activity. May be involved in translesion synthesis (TSL), in conjunction with the beta clamp from PolIII. This is DNA polymerase IV 2 (dinB2) from Bacillus subtilis (strain 168).